The following is a 91-amino-acid chain: MAKGQSLQDPYLNALRRERIPVSIYLVNGIKLQGQIESFDQFVILLKNTVNQMVYKHAISTVVPARSVSHHNNNHHTTPTEAVENVETQAE.

A Sm domain is found at 9-68; it reads DPYLNALRRERIPVSIYLVNGIKLQGQIESFDQFVILLKNTVNQMVYKHAISTVVPARSV. The tract at residues 68-91 is disordered; sequence VSHHNNNHHTTPTEAVENVETQAE.

The protein belongs to the Hfq family. In terms of assembly, homohexamer.

In terms of biological role, RNA chaperone that binds small regulatory RNA (sRNAs) and mRNAs to facilitate mRNA translational regulation in response to envelope stress, environmental stress and changes in metabolite concentrations. Also binds with high specificity to tRNAs. The sequence is that of RNA-binding protein Hfq from Haemophilus influenzae (strain 86-028NP).